The sequence spans 595 residues: MVDFTNPNTLAASVLVETLFRLGLQQAVICPGSRSSPLTVALARHGGIDCVVSLDERSASFFALGHGKRTGQPVALVCTSGTAAANFLPAIIEAHYSQVPLLVLTGDRPPRLRHCRAGQTIDQTKLYGHYPQWQTELALPEPNMDYCHYLRQTALHSWQKCFWPGLGVVHLNCPFDEPLVPLEHARESLQHLAEEFSKEHFYRGLTTFTTMNRGEAISLPVNFSIFSFPSPQLDFSPLGLILVGVMPGGETPSLLTDILAIARGLGYPVLCDALCSLRNYDDGQTALITNYDFLIRCPRWAEQLVPEQIIQIGELPTSKALRHWLGTIDCPRYILNFHGENLDPLQGQTIYLSASVAQVAEYIHNQGFIPDAEQKNYAHSWLEKQRQSQTIIISALADAHTPLMVAQLAHCLPPQTNLFVANSLPVRWLEFFWPANGDHHRIFVNRGANGIDGTLSTAMGIAHRSRGETVLLTGDLSLLHDSNGFLNQSQMRGNLTIILLNNNGGGIFQTLPIAQCEDVFETYFATPQGVDFGQLCRTYGVEHKIITNLWDLKEQWPSNNSSPIRVLEIIGDRHQEAQWLKSLQAQFCCADSLIQ.

Belongs to the TPP enzyme family. MenD subfamily. In terms of assembly, homodimer. The cofactor is Mg(2+). Requires Mn(2+) as cofactor. Thiamine diphosphate serves as cofactor.

The catalysed reaction is isochorismate + 2-oxoglutarate + H(+) = 5-enolpyruvoyl-6-hydroxy-2-succinyl-cyclohex-3-ene-1-carboxylate + CO2. Its pathway is quinol/quinone metabolism; 1,4-dihydroxy-2-naphthoate biosynthesis; 1,4-dihydroxy-2-naphthoate from chorismate: step 2/7. The protein operates within cofactor biosynthesis; phylloquinone biosynthesis. Catalyzes the thiamine diphosphate-dependent decarboxylation of 2-oxoglutarate and the subsequent addition of the resulting succinic semialdehyde-thiamine pyrophosphate anion to isochorismate to yield 2-succinyl-5-enolpyruvyl-6-hydroxy-3-cyclohexene-1-carboxylate (SEPHCHC). The sequence is that of 2-succinyl-5-enolpyruvyl-6-hydroxy-3-cyclohexene-1-carboxylate synthase from Synechocystis sp. (strain ATCC 27184 / PCC 6803 / Kazusa).